The primary structure comprises 305 residues: Sulfate adenylyltransferase subunit 2 (305 aa).

This sequence belongs to the PAPS reductase family. CysD subfamily. In terms of assembly, heterodimer composed of CysD, the smaller subunit, and CysN.

It catalyses the reaction sulfate + ATP + H(+) = adenosine 5'-phosphosulfate + diphosphate. It participates in sulfur metabolism; hydrogen sulfide biosynthesis; sulfite from sulfate: step 1/3. Its function is as follows. With CysN forms the ATP sulfurylase (ATPS) that catalyzes the adenylation of sulfate producing adenosine 5'-phosphosulfate (APS) and diphosphate, the first enzymatic step in sulfur assimilation pathway. APS synthesis involves the formation of a high-energy phosphoric-sulfuric acid anhydride bond driven by GTP hydrolysis by CysN coupled to ATP hydrolysis by CysD. The sequence is that of Sulfate adenylyltransferase subunit 2 from Pseudomonas putida (strain ATCC 700007 / DSM 6899 / JCM 31910 / BCRC 17059 / LMG 24140 / F1).